Reading from the N-terminus, the 200-residue chain is Recombination protein RecR (200 aa).

The C4-type zinc finger occupies 60–75 (CVYCQALTEDDVCNIC). One can recognise a Toprim domain in the interval 83–177 (TKLCIIESML…KISRIGFGVP (95 aa)).

It belongs to the RecR family.

Functionally, may play a role in DNA repair. It seems to be involved in an RecBC-independent recombinational process of DNA repair. It may act with RecF and RecO. This Francisella tularensis subsp. novicida (strain U112) protein is Recombination protein RecR.